The following is a 704-amino-acid chain: Plasma membrane ATPase 2 (704 aa).

A helical membrane pass occupies residues 1-16 (CSIAVGMIIEIIVMYP). Residues 17-26 (IQHRKYRPGI) are Extracellular-facing. The helical transmembrane segment at 27–48 (DNLLVLLIGGIPIAMPTVLSVT) threads the bilayer. The Cytoplasmic segment spans residues 49-395 (MAIGSHRLAQ…TSRAIFQRMK (347 aa)). The 4-aspartylphosphate intermediate role is filled by D81. Mg(2+) contacts are provided by D340 and D344. A helical membrane pass occupies residues 396–417 (NYTIYAVSITIRIVLGFMLLAL). The Extracellular segment spans residues 418 to 422 (IWKFD). Residues 423–445 (FPPFMVLIIAILNDGTIMTISKD) form a helical membrane-spanning segment. At 446–461 (RVKPSPLPDSWKLAEI) the chain is on the cytoplasmic side. A helical transmembrane segment spans residues 462-482 (FTTGVVLGGYLAMMTVIFFWA). At 483 to 507 (AYETQFFPRVFGVSTLQRTATDDFR) the chain is on the extracellular side. Residues 508-528 (KLASAIYLQVSTISQALIFVT) form a helical membrane-spanning segment. At 529-540 (RSRSWSFVERPG) the chain is on the cytoplasmic side. The chain crosses the membrane as a helical span at residues 541-561 (LLLVVALIVAQLVATLIAVYA). Topologically, residues 562-570 (SWSFAAIEG) are extracellular. A helical transmembrane segment spans residues 571–591 (IGWGWAGVIWLYNLVFYFPLD). The Cytoplasmic portion of the chain corresponds to 592–704 (IIKFLIRYAL…IETIQQSYTV (113 aa)).

It belongs to the cation transport ATPase (P-type) (TC 3.A.3) family. Type IIIA subfamily. Possibly exists as a homodimer or a homotrimer.

It localises to the cell membrane. It catalyses the reaction ATP + H2O + H(+)(in) = ADP + phosphate + 2 H(+)(out). Its function is as follows. The plasma membrane ATPase of plants and fungi is a hydrogen ion pump. The proton gradient it generates drives the active transport of nutrients by H(+)-symport. The resulting external acidification and/or internal alkinization may mediate growth responses. The polypeptide is Plasma membrane ATPase 2 (LHA2) (Solanum lycopersicum (Tomato)).